The primary structure comprises 316 residues: Tyrosine recombinase XerC (316 aa).

In terms of domain architecture, Core-binding (CB) spans serine 11–isoleucine 97. Residues proline 118–aspartate 298 form the Tyr recombinase domain. Catalysis depends on residues arginine 157, lysine 181, histidine 250, arginine 253, and histidine 276. Tyrosine 285 (O-(3'-phospho-DNA)-tyrosine intermediate) is an active-site residue.

The protein belongs to the 'phage' integrase family. XerC subfamily. Forms a cyclic heterotetrameric complex composed of two molecules of XerC and two molecules of XerD.

It localises to the cytoplasm. Functionally, site-specific tyrosine recombinase, which acts by catalyzing the cutting and rejoining of the recombining DNA molecules. The XerC-XerD complex is essential to convert dimers of the bacterial chromosome into monomers to permit their segregation at cell division. It also contributes to the segregational stability of plasmids. This is Tyrosine recombinase XerC from Vibrio vulnificus (strain CMCP6).